We begin with the raw amino-acid sequence, 505 residues long: MITLTGHTLTVEEMKRLLLEGEGVTACPNSMQKVAECREVVEKIVEDGKVVYGITTGFGKFSDVLIQKEDVKALQHNLIQSHACGIGDPFPEEVSRGMLILRANTMLKGVSGVRPLVVNMLLEFVNRKIHPVVPQQGSLGASGDLAPLSHLALVLLGEGEVFYKGKRAHAMVALTEEGLEPIELEAKEGLALINGTQAMTAQGVLSYIEAEATAYQAELIASMTIEGLQGIIDAFDENVHKARGYKEQVEVASRIRDILHDSKLTTKQGELRVQDAYSLRCIPQVHGASWQVLNYVKEKLEIEMNAATDNPLIFDGGEKVISGGNFHGQPIAFAMDFLKVGMAELANISERRIERLVNPQLNDLPPFLSPEPGLQSGAMIMQYAAASLVSENKTLAHPASVDSIPSSANQEDHVSMGTIASRHAHQIIQNVRRVLSIEMICAMQAAEYRGIENMSTVTKSFYHQGRQQVPSITNDRIFSTDIENITHWLKTNYSIKERLDVNAAL.

The segment at residues 141–143 (ASG) is a cross-link (5-imidazolinone (Ala-Gly)). Ser142 is modified (2,3-didehydroalanine (Ser)).

The protein belongs to the PAL/histidase family. In terms of processing, contains an active site 4-methylidene-imidazol-5-one (MIO), which is formed autocatalytically by cyclization and dehydration of residues Ala-Ser-Gly.

It is found in the cytoplasm. It catalyses the reaction L-histidine = trans-urocanate + NH4(+). Its pathway is amino-acid degradation; L-histidine degradation into L-glutamate; N-formimidoyl-L-glutamate from L-histidine: step 1/3. In Bacillus cereus (strain ZK / E33L), this protein is Histidine ammonia-lyase.